Here is a 437-residue protein sequence, read N- to C-terminus: MMSVTVETLENLERKVVLSLPWSEINAETDKKLKQTQRRAKIDGFRPGKAPLKMIAQMYGASAQNDVINELVQRRFHDVAVAQELKVAGFPRFEGVEEQDDKESFKVAAIFEVFPEVVIGDLSAQEVEKVTASVGDAEVDQTVEILRKQRTRFNHVEREARNGDRVIIDFEGKIDGEPFAGGASKNYAFVLGASQMLPEFEAGVVGMKAGESKDVTVNFPEDYHGKDVAGKTAVFTITLNNVSEATLPEVDADFAKALGIADGDVAKMREEVKKNVSREVERRVNEQTKESVMNALLKAVELKAPVALVNEEAARLANEMKQNFVNQGMADAANLDLPLDMFKEQAERRVSLGLILAKLVDENKLEPTEEQIKAVVANFAESYEDPQEVIDWYYAEPSRLQAPTSLAIESNVVDFVLGKAKVNEKALSFDEVMGAQA.

The PPIase FKBP-type domain occupies Gly163–Pro248.

The protein belongs to the FKBP-type PPIase family. Tig subfamily.

The protein localises to the cytoplasm. It carries out the reaction [protein]-peptidylproline (omega=180) = [protein]-peptidylproline (omega=0). Involved in protein export. Acts as a chaperone by maintaining the newly synthesized protein in an open conformation. Functions as a peptidyl-prolyl cis-trans isomerase. This is Trigger factor (tig) from Neisseria meningitidis serogroup A / serotype 4A (strain DSM 15465 / Z2491).